Consider the following 387-residue polypeptide: MLEFEVLKTDPATVDSEGAYLGSYARRGQLTLNHGVVQTPIFMPVGTYGTVKGVTPQSLHDMNAQIILGNTFHLWMRPGLDVVAQFGGLHKFESWHKPILTDSGGFQVWSLGEMRKISEEGVKFASPVNGDKLFLTPEISMQIQTLLNSDIVMQFDECTPYDTKGHITTEGEARSSMELSRRWAKRCEIEFDKLENPNALFGIVQGGMFENLRQESLDALVEMDFPGYAVGGVSVGEPKEEMLRIMAHTPHRLPAHKPRYLMGVGTPEDLVEGVASGVDMFDCVMPTRNARNGHMFTRFGDLKIRNARYKSEEAPVDSTCGCYTCRNFSRAYMHHLDRCGEMLGPMLSSIHNLHYYLNLMQEVRGALDAGRFGEFVRQFKADRQRGV.

The active-site Proton acceptor is Asp-102. Residues 102–106 (DSGGF), Asp-156, Gln-205, and Gly-232 each bind substrate. The segment at 263–269 (GVGTPED) is RNA binding. Catalysis depends on Asp-282, which acts as the Nucleophile. Positions 287–291 (TRNAR) are RNA binding; important for wobble base 34 recognition. Zn(2+) contacts are provided by Cys-320, Cys-322, Cys-325, and His-351.

It belongs to the queuine tRNA-ribosyltransferase family. Homodimer. Within each dimer, one monomer is responsible for RNA recognition and catalysis, while the other monomer binds to the replacement base PreQ1. Zn(2+) is required as a cofactor.

The catalysed reaction is 7-aminomethyl-7-carbaguanine + guanosine(34) in tRNA = 7-aminomethyl-7-carbaguanosine(34) in tRNA + guanine. Its pathway is tRNA modification; tRNA-queuosine biosynthesis. Catalyzes the base-exchange of a guanine (G) residue with the queuine precursor 7-aminomethyl-7-deazaguanine (PreQ1) at position 34 (anticodon wobble position) in tRNAs with GU(N) anticodons (tRNA-Asp, -Asn, -His and -Tyr). Catalysis occurs through a double-displacement mechanism. The nucleophile active site attacks the C1' of nucleotide 34 to detach the guanine base from the RNA, forming a covalent enzyme-RNA intermediate. The proton acceptor active site deprotonates the incoming PreQ1, allowing a nucleophilic attack on the C1' of the ribose to form the product. After dissociation, two additional enzymatic reactions on the tRNA convert PreQ1 to queuine (Q), resulting in the hypermodified nucleoside queuosine (7-(((4,5-cis-dihydroxy-2-cyclopenten-1-yl)amino)methyl)-7-deazaguanosine). This chain is Queuine tRNA-ribosyltransferase, found in Polaromonas naphthalenivorans (strain CJ2).